Consider the following 398-residue polypeptide: Deoxyguanosinetriphosphate triphosphohydrolase-like protein (398 aa).

Residues 68 to 215 (RLTHTLEVAQ…AAISDDIAYD (148 aa)) form the HD domain.

The protein belongs to the dGTPase family. Type 2 subfamily.

The chain is Deoxyguanosinetriphosphate triphosphohydrolase-like protein from Azorhizobium caulinodans (strain ATCC 43989 / DSM 5975 / JCM 20966 / LMG 6465 / NBRC 14845 / NCIMB 13405 / ORS 571).